Here is a 258-residue protein sequence, read N- to C-terminus: UPF0246 protein YaaA (258 aa).

The protein belongs to the UPF0246 family.

This is UPF0246 protein YaaA from Shigella flexneri serotype 5b (strain 8401).